Reading from the N-terminus, the 488-residue chain is GTPase Der (488 aa).

2 EngA-type G domains span residues P3–P166 and I193–V366. Residues G9–S16, D56–I60, N118–D121, G199–S206, D246–V250, and N311–D314 contribute to the GTP site. Residues T367–D451 form the KH-like domain. Basic and acidic residues predominate over residues G449–L461. The disordered stretch occupies residues G449–K488. Residues N467–K488 are compositionally biased toward basic residues.

The protein belongs to the TRAFAC class TrmE-Era-EngA-EngB-Septin-like GTPase superfamily. EngA (Der) GTPase family. In terms of assembly, associates with the 50S ribosomal subunit.

In terms of biological role, GTPase that plays an essential role in the late steps of ribosome biogenesis. In Pseudomonas entomophila (strain L48), this protein is GTPase Der.